The primary structure comprises 341 residues: Phenylalanine--tRNA ligase alpha subunit (341 aa).

Glu256 lines the Mg(2+) pocket.

It belongs to the class-II aminoacyl-tRNA synthetase family. Phe-tRNA synthetase alpha subunit type 1 subfamily. As to quaternary structure, tetramer of two alpha and two beta subunits. Mg(2+) is required as a cofactor.

It localises to the cytoplasm. It catalyses the reaction tRNA(Phe) + L-phenylalanine + ATP = L-phenylalanyl-tRNA(Phe) + AMP + diphosphate + H(+). The polypeptide is Phenylalanine--tRNA ligase alpha subunit (pheS) (Chlamydia muridarum (strain MoPn / Nigg)).